We begin with the raw amino-acid sequence, 146 residues long: Universal stress protein MTH_1154 (146 aa).

Belongs to the universal stress protein A family.

The chain is Universal stress protein MTH_1154 from Methanothermobacter thermautotrophicus (strain ATCC 29096 / DSM 1053 / JCM 10044 / NBRC 100330 / Delta H) (Methanobacterium thermoautotrophicum).